The primary structure comprises 25 residues: Nicotinic acetylcholine receptor-binding protein Mnn-4 (25 aa).

Cys-3 and Cys-20 are disulfide-bonded.

Belongs to the three-finger toxin family. Short-chain subfamily. Expressed by the venom gland.

The protein localises to the secreted. Functionally, binds and may inhibit nicotinic acetylcholine receptors (nAChR). In Micrurus nigrocinctus (Central American coral snake), this protein is Nicotinic acetylcholine receptor-binding protein Mnn-4.